Consider the following 194-residue polypeptide: ATP-dependent Clp protease proteolytic subunit (194 aa).

Residue Ser98 is the Nucleophile of the active site. Residue His123 is part of the active site.

Belongs to the peptidase S14 family. Fourteen ClpP subunits assemble into 2 heptameric rings which stack back to back to give a disk-like structure with a central cavity, resembling the structure of eukaryotic proteasomes.

The protein localises to the cytoplasm. It carries out the reaction Hydrolysis of proteins to small peptides in the presence of ATP and magnesium. alpha-casein is the usual test substrate. In the absence of ATP, only oligopeptides shorter than five residues are hydrolyzed (such as succinyl-Leu-Tyr-|-NHMec, and Leu-Tyr-Leu-|-Tyr-Trp, in which cleavage of the -Tyr-|-Leu- and -Tyr-|-Trp bonds also occurs).. Its function is as follows. Cleaves peptides in various proteins in a process that requires ATP hydrolysis. Has a chymotrypsin-like activity. Plays a major role in the degradation of misfolded proteins. This Clostridium tetani (strain Massachusetts / E88) protein is ATP-dependent Clp protease proteolytic subunit.